The sequence spans 962 residues: Nonribosomal peptide synthetase atqA (962 aa).

Positions 34 to 462 (AANTTEGIIA…DGRTKEMVNI (429 aa)) are adenylation (A) domain. Positions 595–672 (SAEEATILSI…GLCQRIAATS (78 aa)) constitute a Carrier domain. Position 630 is an O-(pantetheine 4'-phosphoryl)serine (Ser-630). The thioesterase (TE) domain stretch occupies residues 694–951 (PLWLVHPGVG…KPEYVANFAK (258 aa)).

Belongs to the NRP synthetase family.

It participates in secondary metabolite biosynthesis. In terms of biological role, nonribosomal peptide synthetase; part of the gene cluster that mediates the biosynthesis of asterriquinone CT5, a natural product that displays potential biological activities including antitumor and insulin mimic activities. The nonribosomal peptide synthetase atqA is responsible for the production of the benzoquinone derivative didemethylasterriquinone D (DDAQ D), via condensation of 2 indole pyruvic acid (IPA) molecules. The symmetric connectivity of the 2 IPA molecules is thought to arise by head-to-tail dual Claisen condensations catalyzed by the TE domain of atqA. DDAQ D represents the core structure of asterriquinones and is further modified by yet unidentified tailoring enzymes to lead to the production of asterriquinone CT5. The protein is Nonribosomal peptide synthetase atqA of Aspergillus terreus (strain NIH 2624 / FGSC A1156).